The primary structure comprises 433 residues: N-lysine methyltransferase SMYD2 (433 aa).

The 235-residue stretch at Gly7–Ile241 folds into the SET domain. An S-adenosyl-L-methionine-binding site is contributed by Lys17–Arg19. Zn(2+)-binding residues include Cys52, Cys55, Cys65, Cys68, Cys74, Cys78, His86, and Cys90. Residues Cys52–Cys90 form an MYND-type zinc finger. Residues His137, Asn206 to His207, and Tyr258 to Phe260 contribute to the S-adenosyl-L-methionine site. Ser283 carries the post-translational modification Phosphoserine.

Belongs to the class V-like SAM-binding methyltransferase superfamily. In terms of assembly, interacts with RNA polymerase II and HELZ. Interacts with SIN3A and HDAC1. Interacts (via MYND-type zinc finger) with EPB41L3. Interacts (via SET domain) with p53/TP53. Interacts with RB1 and HSP90AA1.

The protein localises to the cytoplasm. It localises to the cytosol. Its subcellular location is the nucleus. It carries out the reaction L-lysyl(4)-[histone H3] + 3 S-adenosyl-L-methionine = N(6),N(6),N(6)-trimethyl-L-lysyl(4)-[histone H3] + 3 S-adenosyl-L-homocysteine + 3 H(+). It catalyses the reaction L-lysyl-[protein] + S-adenosyl-L-methionine = N(6)-methyl-L-lysyl-[protein] + S-adenosyl-L-homocysteine + H(+). Protein-lysine N-methyltransferase that methylates both histones and non-histone proteins, including p53/TP53 and RB1. Specifically trimethylates histone H3 'Lys-4' (H3K4me3) in vivo. The activity requires interaction with HSP90alpha. Shows even higher methyltransferase activity on p53/TP53. Monomethylates 'Lys-370' of p53/TP53, leading to decreased DNA-binding activity and subsequent transcriptional regulation activity of p53/TP53. Monomethylates RB1 at 'Lys-860'. This is N-lysine methyltransferase SMYD2 (SMYD2) from Homo sapiens (Human).